A 268-amino-acid chain; its full sequence is Imidazole glycerol phosphate synthase subunit HisF (268 aa).

Residues D12 and D131 contribute to the active site.

Belongs to the HisA/HisF family. As to quaternary structure, heterodimer of HisH and HisF.

Its subcellular location is the cytoplasm. The catalysed reaction is 5-[(5-phospho-1-deoxy-D-ribulos-1-ylimino)methylamino]-1-(5-phospho-beta-D-ribosyl)imidazole-4-carboxamide + L-glutamine = D-erythro-1-(imidazol-4-yl)glycerol 3-phosphate + 5-amino-1-(5-phospho-beta-D-ribosyl)imidazole-4-carboxamide + L-glutamate + H(+). Its pathway is amino-acid biosynthesis; L-histidine biosynthesis; L-histidine from 5-phospho-alpha-D-ribose 1-diphosphate: step 5/9. Functionally, IGPS catalyzes the conversion of PRFAR and glutamine to IGP, AICAR and glutamate. The HisF subunit catalyzes the cyclization activity that produces IGP and AICAR from PRFAR using the ammonia provided by the HisH subunit. This is Imidazole glycerol phosphate synthase subunit HisF from Methanosphaerula palustris (strain ATCC BAA-1556 / DSM 19958 / E1-9c).